Reading from the N-terminus, the 67-residue chain is DNA-directed RNA polymerase subunit omega (67 aa).

This sequence belongs to the RNA polymerase subunit omega family. In terms of assembly, the RNAP catalytic core consists of 2 alpha, 1 beta, 1 beta' and 1 omega subunit. When a sigma factor is associated with the core the holoenzyme is formed, which can initiate transcription.

The catalysed reaction is RNA(n) + a ribonucleoside 5'-triphosphate = RNA(n+1) + diphosphate. Functionally, promotes RNA polymerase assembly. Latches the N- and C-terminal regions of the beta' subunit thereby facilitating its interaction with the beta and alpha subunits. In Burkholderia multivorans (strain ATCC 17616 / 249), this protein is DNA-directed RNA polymerase subunit omega.